Here is a 156-residue protein sequence, read N- to C-terminus: Probable low-salt glycan biosynthesis epimerase Agl13 (156 aa).

Substrate contacts are provided by residues Arg19, Glu24, 39–41 (MSY), Arg51, His54, and His109.

The protein belongs to the dTDP-4-dehydrorhamnose 3,5-epimerase family.

The protein operates within protein modification; protein glycosylation. It functions in the pathway cell surface structure biogenesis; S-layer biogenesis. Its function is as follows. Epimerase involved in N-glycan biosynthetic pathway that takes place under low-salt conditions (1.75 M instead of 3.4 M). Participates in the formation of the tetrasaccharide present at 'Asn-532' of S-layer glycoprotein Csg, consisting of a sulfated hexose, 2 hexoses and rhamnose. Involved in the addition of final rhamnose (sugar 4) of the tetrasaccharide on the dolichol phosphate carrier. This is Probable low-salt glycan biosynthesis epimerase Agl13 (agl13) from Haloferax volcanii (strain ATCC 29605 / DSM 3757 / JCM 8879 / NBRC 14742 / NCIMB 2012 / VKM B-1768 / DS2) (Halobacterium volcanii).